A 117-amino-acid polypeptide reads, in one-letter code: Large ribosomal subunit protein uL18 (117 aa).

This sequence belongs to the universal ribosomal protein uL18 family. Part of the 50S ribosomal subunit; part of the 5S rRNA/L5/L18/L25 subcomplex. Contacts the 5S and 23S rRNAs.

In terms of biological role, this is one of the proteins that bind and probably mediate the attachment of the 5S RNA into the large ribosomal subunit, where it forms part of the central protuberance. The sequence is that of Large ribosomal subunit protein uL18 from Yersinia enterocolitica serotype O:8 / biotype 1B (strain NCTC 13174 / 8081).